Reading from the N-terminus, the 514-residue chain is Zinc finger CCCH-type with G patch domain-containing protein (514 aa).

Residues 96–129 (GEEPQPPGAGDGASTGSKDSEEEEEEEDGSSGMK) are disordered. Over residues 115–124 (SEEEEEEEDG) the composition is skewed to acidic residues. The C3H1-type zinc finger occupies 171–197 (KAMKPCPFFLDGKCRFDDSCRFSHGQV). Disordered stretches follow at residues 262–288 (IPPLRGSDSSSSDDDDDDEEEDDAAED), 363–422 (QQRK…AAER), and 494–514 (EEHSLQREQRKADTHKKMTEF). A compositionally biased stretch (acidic residues) spans 272-287 (SSDDDDDDEEEDDAAE). One can recognise a G-patch domain in the interval 315 to 373 (TRGIGSKLLARMGYEIGKGLGRNAEGRVEPIQAVLLPKGKSLDQCIEMQQRKKAGGKRE). Over residues 365-383 (RKKAGGKREHKAGKRRPRA) the composition is skewed to basic residues.

The protein localises to the nucleus. Transcription repressor that specifically binds the 5'-GGAG[GA]A[GA]A-3' consensus sequence. Represses transcription by recruiting the chromatin multiprotein complex NuRD to target promoters. Negatively regulates expression of EGFR, a gene involved in cell proliferation, survival and migration. The chain is Zinc finger CCCH-type with G patch domain-containing protein (zgpat) from Xenopus tropicalis (Western clawed frog).